A 384-amino-acid polypeptide reads, in one-letter code: Sodium channel protein Nach (384 aa).

Residues 1-319 are Extracellular-facing; sequence AAFAYFSGFM…LVSHLGSAFS (319 aa). N-linked (GlcNAc...) asparagine glycosylation is found at Asn-32 and Asn-215. Residues 320 to 340 form a helical membrane-spanning segment; sequence LFVGMSMLSLVEIIYYFTVIL. Topologically, residues 341–384 are cytoplasmic; that stretch reads RRNYVQECRARQKLQTLHRRPNFGWPGDKNSNQQKSVFYIRGRN.

It belongs to the amiloride-sensitive sodium channel (TC 1.A.6) family.

The protein localises to the membrane. Functionally, part of a complex that plays a role in tracheal liquid clearance. Probable role in sodium transport. The chain is Sodium channel protein Nach (Nach) from Drosophila virilis (Fruit fly).